Reading from the N-terminus, the 237-residue chain is Methylthioribulose-1-phosphate dehydratase (237 aa).

C97 provides a ligand contact to substrate. 2 residues coordinate Zn(2+): H114 and H116. The active-site Proton donor/acceptor is the E143. H199 serves as a coordination point for Zn(2+).

The protein belongs to the aldolase class II family. MtnB subfamily. Zn(2+) is required as a cofactor.

The protein localises to the cytoplasm. It carries out the reaction 5-(methylsulfanyl)-D-ribulose 1-phosphate = 5-methylsulfanyl-2,3-dioxopentyl phosphate + H2O. It participates in amino-acid biosynthesis; L-methionine biosynthesis via salvage pathway; L-methionine from S-methyl-5-thio-alpha-D-ribose 1-phosphate: step 2/6. Its function is as follows. Catalyzes the dehydration of methylthioribulose-1-phosphate (MTRu-1-P) into 2,3-diketo-5-methylthiopentyl-1-phosphate (DK-MTP-1-P). This chain is Methylthioribulose-1-phosphate dehydratase, found in Coccidioides posadasii (strain C735) (Valley fever fungus).